Reading from the N-terminus, the 88-residue chain is MKFFLLFLVVLPIMGVLGKKNGYAVDSKGKAPECFLSNYCNNECTKVHYADKGYCCLLSCYCFGLNDDKKVLEISGTTKKYCDFTIIN.

The first 18 residues, 1-18 (MKFFLLFLVVLPIMGVLG), serve as a signal peptide directing secretion. The LCN-type CS-alpha/beta domain maps to 20-83 (KNGYAVDSKG…ISGTTKKYCD (64 aa)). 4 disulfide bridges follow: Cys-34-Cys-55, Cys-40-Cys-60, Cys-44-Cys-62, and Cys-56-Cys-82.

This sequence belongs to the long (4 C-C) scorpion toxin superfamily. Sodium channel inhibitor family. Beta subfamily. In terms of tissue distribution, expressed by the venom gland.

Its subcellular location is the secreted. Functionally, excitatory insect toxins induce a spastic paralysis. They bind voltage-independently at site-4 of sodium channels (Nav) and shift the voltage of activation toward more negative potentials thereby affecting sodium channel activation and promoting spontaneous and repetitive firing. In Leiurus hebraeus (Hebrew deathstalker scorpion), this protein is Beta-insect excitatory toxin LqhIT1a.